The primary structure comprises 147 residues: Large ribosomal subunit protein uL15 (147 aa).

Residues 21 to 49 (RVGRGEGSKGKTAGRGTKGTKARAPVRPG) form a disordered region.

This sequence belongs to the universal ribosomal protein uL15 family. Part of the 50S ribosomal subunit.

Binds to the 23S rRNA. The chain is Large ribosomal subunit protein uL15 from Tropheryma whipplei (strain TW08/27) (Whipple's bacillus).